The primary structure comprises 351 residues: Prostaglandin reductase 2 (351 aa).

Substrate is bound at residue 99–100 (FY). Residues 165–168 (GACG), Lys-192, Tyr-208, Asn-231, 253–259 (CGQISQY), 287–289 (FLV), and Asn-337 contribute to the NADP(+) site. 288–290 (LVL) contributes to the substrate binding site.

This sequence belongs to the NADP-dependent oxidoreductase L4BD family. Monomer.

Its subcellular location is the cytoplasm. The enzyme catalyses 13,14-dihydro-15-oxo-prostaglandin E2 + NAD(+) = 15-oxoprostaglandin E2 + NADH + H(+). It catalyses the reaction 13,14-dihydro-15-oxo-prostaglandin E2 + NADP(+) = 15-oxoprostaglandin E2 + NADPH + H(+). The catalysed reaction is 13,14-dihydro-15-oxo-PGF2alpha + NADP(+) = 15-oxoprostaglandin F2alpha + NADPH + H(+). It carries out the reaction 13,14-dihydro-15-oxo-prostaglandin E1 + NADP(+) = 15-oxoprostaglandin E1 + NADPH + H(+). The enzyme catalyses 13,14-dihydro-15-oxo-prostaglandin F1alpha + NADP(+) = 15-oxoprostaglandin F1alpha + NADPH + H(+). Its function is as follows. Functions as 15-oxo-prostaglandin 13-reductase and acts on 15-keto-PGE1, 15-keto-PGE2, 15-keto-PGE1-alpha and 15-keto-PGE2-alpha with highest activity towards 15-keto-PGE2. Overexpression represses transcriptional activity of PPARG and inhibits adipocyte differentiation. The polypeptide is Prostaglandin reductase 2 (PTGR2) (Pongo abelii (Sumatran orangutan)).